A 92-amino-acid chain; its full sequence is Large ribosomal subunit protein bL25 (92 aa).

Belongs to the bacterial ribosomal protein bL25 family. In terms of assembly, part of the 50S ribosomal subunit; part of the 5S rRNA/L5/L18/L25 subcomplex. Contacts the 5S rRNA. Binds to the 5S rRNA independently of L5 and L18.

Functionally, this is one of the proteins that binds to the 5S RNA in the ribosome where it forms part of the central protuberance. The chain is Large ribosomal subunit protein bL25 from Aliivibrio fischeri (strain ATCC 700601 / ES114) (Vibrio fischeri).